The following is a 182-amino-acid chain: uncharacterized protein (182 aa).

BNR repeat units lie at residues 58–69 (WISFDAGENWET) and 102–113 (YITDDRGESWRA).

This is an uncharacterized protein from Saccharomyces cerevisiae (strain ATCC 204508 / S288c) (Baker's yeast).